Consider the following 1516-residue polypeptide: Myosin-52 (1516 aa).

A Myosin N-terminal SH3-like domain is found at 7–62 (YKGLQCWIPDEQSQWIPGSIKDCRVEGEKAFLTVQDENENETVITVKPDDLNYEGR). Residues 73–766 (SDADDLTDLS…VTPLLESARD (694 aa)) enclose the Myosin motor domain. ATP is bound at residue 167–174 (GESGAGKT). Residues 647-669 (LVSLMSTINETNAHYIRCIKPNE) are actin-binding. IQ domains follow at residues 793 to 813 (RKRV…RHTE), 818 to 838 (SSNI…KEFI), 840 to 865 (TKNS…EKTK), 866 to 886 (HDAT…KHYK), and 888 to 917 (LQYY…ESTK). Residues 926 to 1034 (YRLESRLFEI…LKSQLKNYDM (109 aa)) are a coiled coil. Serine 1065 and serine 1072 each carry phosphoserine. Positions 1163–1431 (ERYCVHTLEY…SELSKNIVAE (269 aa)) constitute a Dilute domain.

Belongs to the TRAFAC class myosin-kinesin ATPase superfamily. Myosin family.

The protein resides in the cytoplasm. Its function is as follows. Involved in cell wall deposition where it has a role in the localization of mok1. The protein is Myosin-52 (myo52) of Schizosaccharomyces pombe (strain 972 / ATCC 24843) (Fission yeast).